A 211-amino-acid chain; its full sequence is FMN-dependent NADH:quinone oxidoreductase (211 aa).

Residues 17 to 19 and 99 to 102 contribute to the FMN site; these read SYS and MWNF.

The protein belongs to the azoreductase type 1 family. Homodimer. FMN serves as cofactor.

It catalyses the reaction 2 a quinone + NADH + H(+) = 2 a 1,4-benzosemiquinone + NAD(+). It carries out the reaction N,N-dimethyl-1,4-phenylenediamine + anthranilate + 2 NAD(+) = 2-(4-dimethylaminophenyl)diazenylbenzoate + 2 NADH + 2 H(+). In terms of biological role, quinone reductase that provides resistance to thiol-specific stress caused by electrophilic quinones. Its function is as follows. Also exhibits azoreductase activity. Catalyzes the reductive cleavage of the azo bond in aromatic azo compounds to the corresponding amines. This is FMN-dependent NADH:quinone oxidoreductase from Exiguobacterium sp. (strain ATCC BAA-1283 / AT1b).